Reading from the N-terminus, the 208-residue chain is CD209 antigen-like protein E (208 aa).

The Cytoplasmic portion of the chain corresponds to 1 to 16 (MRAPQMGSLGFLDKGH). The chain crosses the membrane as a helical; Signal-anchor for type II membrane protein span at residues 17-37 (IPLVLQLLFLILFTGLLVAII). The Extracellular portion of the chain corresponds to 38–208 (IQVSKMPSSE…KIATTCLSKW (171 aa)). Cystine bridges form between C77-C88, C105-C197, and C176-C189. One can recognise a C-type lectin domain in the interval 83–198 (FFNGNCYFFS…CEQRKFWICK (116 aa)).

The protein localises to the membrane. Its function is as follows. Putative pathogen-recognition receptor. May mediate the endocytosis of pathogens which are subsequently degraded in lysosomal compartments. This is CD209 antigen-like protein E (Cd209e) from Mus musculus (Mouse).